Here is a 580-residue protein sequence, read N- to C-terminus: Conglutin beta 3 (580 aa).

Residues M1 to G30 form the signal peptide. Composition is skewed to basic and acidic residues over residues N37–E72 and R79–E92. The segment at N37 to Y165 is disordered. Low complexity predominate over residues Q124–Q133. Residues S134 to R145 are compositionally biased toward basic and acidic residues. 2 Cupin type-1 domains span residues Y164–Q322 and F381–E538. N229 and N488 each carry an N-linked (GlcNAc...) asparagine glycan. Positions F549 to R569 are disordered.

The protein belongs to the 7S seed storage protein family. As to quaternary structure, component of globulins complexes which accumulate in seeds.

Seed storage protein. Accumulates during seed development and is hydrolyzed after germination to provide a carbon and nitrogen source for the developing seedling. The chain is Conglutin beta 3 from Lupinus angustifolius (Narrow-leaved blue lupine).